Here is a 314-residue protein sequence, read N- to C-terminus: MNILLANPRGFCAGVDRAISIVELALEIHGAPIYVRHEVVHNRFVVDGLKAKGAVFVEELDEVPDDAIVIFSAHGVSQEVRQEAKRRGLKVFDATCPLVTKVHMQVARASKKGTKAILIGHEGHPEVIGTMGQYDNQDAGIFLVESVEDIAKLPVSSQDDLTFMTQTTLSIDDTSDVIEALKEKYPAIQGPRKNDICYATTNRQQAVRELAKQSQLVLVVGSKNSSNSNRLAELASRMGVPSKLIDGPQDIDPSWLDGVETIGITAGASAPEVLVQSVVEHLKTLGVTGVSNLEGCEENMVFEVPKELRIHEVK.

[4Fe-4S] cluster is bound at residue Cys12. 2 residues coordinate (2E)-4-hydroxy-3-methylbut-2-enyl diphosphate: His41 and His74. The dimethylallyl diphosphate site is built by His41 and His74. Residues His41 and His74 each coordinate isopentenyl diphosphate. Residue Cys96 participates in [4Fe-4S] cluster binding. (2E)-4-hydroxy-3-methylbut-2-enyl diphosphate is bound at residue His124. His124 is a binding site for dimethylallyl diphosphate. His124 contacts isopentenyl diphosphate. Residue Glu126 is the Proton donor of the active site. Position 167 (Thr167) interacts with (2E)-4-hydroxy-3-methylbut-2-enyl diphosphate. Residue Cys197 participates in [4Fe-4S] cluster binding. 4 residues coordinate (2E)-4-hydroxy-3-methylbut-2-enyl diphosphate: Ser225, Ser226, Asn227, and Ser269. Dimethylallyl diphosphate-binding residues include Ser225, Ser226, Asn227, and Ser269. Isopentenyl diphosphate-binding residues include Ser225, Ser226, Asn227, and Ser269.

This sequence belongs to the IspH family. Requires [4Fe-4S] cluster as cofactor.

The catalysed reaction is isopentenyl diphosphate + 2 oxidized [2Fe-2S]-[ferredoxin] + H2O = (2E)-4-hydroxy-3-methylbut-2-enyl diphosphate + 2 reduced [2Fe-2S]-[ferredoxin] + 2 H(+). It carries out the reaction dimethylallyl diphosphate + 2 oxidized [2Fe-2S]-[ferredoxin] + H2O = (2E)-4-hydroxy-3-methylbut-2-enyl diphosphate + 2 reduced [2Fe-2S]-[ferredoxin] + 2 H(+). It participates in isoprenoid biosynthesis; dimethylallyl diphosphate biosynthesis; dimethylallyl diphosphate from (2E)-4-hydroxy-3-methylbutenyl diphosphate: step 1/1. It functions in the pathway isoprenoid biosynthesis; isopentenyl diphosphate biosynthesis via DXP pathway; isopentenyl diphosphate from 1-deoxy-D-xylulose 5-phosphate: step 6/6. Its function is as follows. Catalyzes the conversion of 1-hydroxy-2-methyl-2-(E)-butenyl 4-diphosphate (HMBPP) into a mixture of isopentenyl diphosphate (IPP) and dimethylallyl diphosphate (DMAPP). Acts in the terminal step of the DOXP/MEP pathway for isoprenoid precursor biosynthesis. The chain is 4-hydroxy-3-methylbut-2-enyl diphosphate reductase from Actinobacillus pleuropneumoniae serotype 7 (strain AP76).